The following is a 198-amino-acid chain: Beta-crystallin A1 (198 aa).

An N-terminal arm region spans residues Met1 to Ser13. 2 consecutive Beta/gamma crystallin 'Greek key' domains span residues Ile14–Cys53 and Gly54–Cys100. 2 positions are modified to S-glutathionyl cysteine; alternate: Cys65 and Cys100. 2 positions are modified to S-methylcysteine; alternate: Cys65 and Cys100. Residues Ser101 to Glu106 are connecting peptide. Beta/gamma crystallin 'Greek key' domains lie at Ser107 to Cys148 and Gly149 to Gln197.

Belongs to the beta/gamma-crystallin family. Homo/heterodimer, or complexes of higher-order. The structure of beta-crystallin oligomers seems to be stabilized through interactions between the N-terminal arms. Interacts with CRYBA1.

Its function is as follows. Crystallins are the dominant structural components of the vertebrate eye lens. In Mus musculus (Mouse), this protein is Beta-crystallin A1.